The chain runs to 174 residues: Ribulose bisphosphate carboxylase small subunit, chloroplastic 1 (174 aa).

The transit peptide at 1–45 directs the protein to the chloroplast; it reads MAPAVMASSATTVAPFQGLKSTAGLPVSRRSRGSLGSVSNGGRIR.

The protein belongs to the RuBisCO small chain family. As to quaternary structure, heterohexadecamer of 8 large and 8 small subunits.

Its subcellular location is the plastid. It is found in the chloroplast. In terms of biological role, ruBisCO catalyzes two reactions: the carboxylation of D-ribulose 1,5-bisphosphate, the primary event in carbon dioxide fixation, as well as the oxidative fragmentation of the pentose substrate. Both reactions occur simultaneously and in competition at the same active site. Although the small subunit is not catalytic it is essential for maximal activity. In Triticum aestivum (Wheat), this protein is Ribulose bisphosphate carboxylase small subunit, chloroplastic 1.